Here is a 207-residue protein sequence, read N- to C-terminus: Superoxide dismutase [Fe] (207 aa).

4 residues coordinate Fe cation: His28, His76, Asp160, and His164.

The protein belongs to the iron/manganese superoxide dismutase family. As to quaternary structure, homotetramer. The cofactor is Fe cation.

It localises to the secreted. It catalyses the reaction 2 superoxide + 2 H(+) = H2O2 + O2. In terms of biological role, destroys superoxide anion radicals which are normally produced within the cells and which are toxic to biological systems. In Mycobacterium tuberculosis (strain CDC 1551 / Oshkosh), this protein is Superoxide dismutase [Fe] (sodB).